The following is a 274-amino-acid chain: Chemotaxis protein methyltransferase 1 (274 aa).

The 274-residue stretch at methionine 1–lysine 274 folds into the CheR-type methyltransferase domain. S-adenosyl-L-methionine-binding positions include asparagine 72, threonine 74, arginine 78, glutamate 115, aspartate 144, asparagine 200–leucine 201, and arginine 217–asparagine 218.

The catalysed reaction is L-glutamyl-[protein] + S-adenosyl-L-methionine = [protein]-L-glutamate 5-O-methyl ester + S-adenosyl-L-homocysteine. In terms of biological role, methylation of the membrane-bound methyl-accepting chemotaxis proteins (MCP) to form gamma-glutamyl methyl ester residues in MCP. This chain is Chemotaxis protein methyltransferase 1 (cheR1), found in Pseudomonas aeruginosa (strain ATCC 15692 / DSM 22644 / CIP 104116 / JCM 14847 / LMG 12228 / 1C / PRS 101 / PAO1).